The primary structure comprises 152 residues: SUZ RNA-binding domain-containing (152 aa).

The tract at residues 28–152 (KISQRENNNT…DGSQGFRQGR (125 aa)) is disordered. Positions 42-107 (RAPVVIQDDS…ARKRILGSAS (66 aa)) constitute an SUZ domain. Composition is skewed to basic and acidic residues over residues 89-100 (AQREAEYAEARK) and 113-130 (EKPVAERPARINQVEEIR). One can recognise an SUZ-C domain in the interval 111–152 (EQEKPVAERPARINQVEEIRQQNNVIRQPLGPDGSQGFRQGR).

This sequence belongs to the SZRD1 family.

The protein is SUZ RNA-binding domain-containing (szrd1) of Xenopus laevis (African clawed frog).